A 218-amino-acid polypeptide reads, in one-letter code: Ras-related protein Rab-42 (218 aa).

5 residues coordinate GTP: Ala-19, Gly-21, Lys-22, Thr-23, and Thr-46. Mg(2+) is bound by residues Thr-23, Thr-46, and Asp-70. The GTP site is built by Gly-73, Lys-130, Asp-132, Val-160, and Lys-161. S-geranylgeranyl cysteine attachment occurs at residues Cys-216 and Cys-218.

Belongs to the small GTPase superfamily. Rab family. Requires Mg(2+) as cofactor.

The protein resides in the membrane. It carries out the reaction GTP + H2O = GDP + phosphate + H(+). With respect to regulation, regulated by guanine nucleotide exchange factors (GEFs) which promote the exchange of bound GDP for free GTP. Regulated by GTPase activating proteins (GAPs) which increase the GTP hydrolysis activity. Inhibited by GDP dissociation inhibitors (GDIs). Its function is as follows. The small GTPases Rab are key regulators of intracellular membrane trafficking, from the formation of transport vesicles to their fusion with membranes. Rabs cycle between an inactive GDP-bound form and an active GTP-bound form that is able to recruit to membranes different sets of downstream effectors directly responsible for vesicle formation, movement, tethering and fusion. The physiological function of RAB42 remains undefined. In Homo sapiens (Human), this protein is Ras-related protein Rab-42.